The primary structure comprises 124 residues: Small ribosomal subunit protein uS12c (124 aa).

Disordered stretches follow at residues 1–28 (MPTI…QSCP) and 104–124 (AAGV…KPKS). Composition is skewed to basic residues over residues 11–20 (ERRKIHKKTK) and 109–124 (DRRK…KPKS).

This sequence belongs to the universal ribosomal protein uS12 family. In terms of assembly, part of the 30S ribosomal subunit.

It localises to the plastid. The protein localises to the chloroplast. Its function is as follows. With S4 and S5 plays an important role in translational accuracy. Located at the interface of the 30S and 50S subunits. In Pyropia yezoensis (Susabi-nori), this protein is Small ribosomal subunit protein uS12c (rps12).